The primary structure comprises 195 residues: Proline-rich protein 3 (195 aa).

Positions 1–29 (MKMNFFNSFPQYGVYILGLNLLLCGVSEG) are cleaved as a signal peptide.

In terms of tissue distribution, component of the acid-insoluble organic matrix of calcified layers of the shell (at protein level).

The protein resides in the secreted. The polypeptide is Proline-rich protein 3 (Lottia gigantea (Giant owl limpet)).